A 715-amino-acid chain; its full sequence is MIYEGKAITVKALESGIVELKFDLKGESVNKFNRLTLNELRQAVDAIRADASVKGVIVRSGKDVFIVGADITEFVDNFKLPEAELVAGNLEANRIFNAFEDLEVPTVAAINGIALGGGLEMCLAADYRVMSTSARIGLPEVKLGIYPGFGGTVRLPRLIGSDNAIEWIAAGKENRAEDALKVGAVDAVVAPELLLAGALDLIKRAISGELDYKAKRQPKLEKLKLNAIEQMMAFETAKGFVAGQAGPNYPAPVEAIKSIQKAANFGRDKALEVEAAGFAKLAKTSVAESLIGLFLNDQELKRKAKAHDEIAHDVKQAAVLGAGIMGGGIAYQSAVKGTPILMKDIREEAIQLGLNEASKLLGNRVEKGRLTPAKMAEALNAIRPTLSYGDFANVDIVVEAVVENPKVKQAVLAEVEGQVKDDAILASNTSTISINLLAKALKRPENFVGMHFFNPVHMMPLVEVIRGEKSSDVAVATTVAYAKKMGKNPIVVNDCPGFLVNRVLFPYFGGFAKLVSAGVDFVRIDKVMEKFGWPMGPAYLMDVVGIDTGHHGRDVMAEGFPDRMKDERRSAVDALYEANRLGQKNGKGFYAYETDKRGKPKKVFDATVLDVLKPIVFEQREVTDEDIINWMMVPLCLETVRCLEDGIVETAAEADMGLVYGIGFPPFRGGALRYIDSIGVAEFVALADQYADLGPLYHPTAKLREMAKNGQRFFN.

Residues 1–190 are enoyl-CoA hydratase/isomerase; it reads MIYEGKAITV…KVGAVDAVVA (190 aa). Residue D297 coordinates substrate. A 3-hydroxyacyl-CoA dehydrogenase region spans residues 312–715; the sequence is HDVKQAAVLG…MAKNGQRFFN (404 aa). NAD(+) contacts are provided by residues M325, D344, 401–403, K408, and S430; that span reads VVE. The active-site For 3-hydroxyacyl-CoA dehydrogenase activity is the H451. N454 provides a ligand contact to NAD(+). The substrate site is built by N501 and Y660.

This sequence in the N-terminal section; belongs to the enoyl-CoA hydratase/isomerase family. It in the C-terminal section; belongs to the 3-hydroxyacyl-CoA dehydrogenase family. Heterotetramer of two alpha chains (FadB) and two beta chains (FadA).

The catalysed reaction is a (3S)-3-hydroxyacyl-CoA + NAD(+) = a 3-oxoacyl-CoA + NADH + H(+). It carries out the reaction a (3S)-3-hydroxyacyl-CoA = a (2E)-enoyl-CoA + H2O. The enzyme catalyses a 4-saturated-(3S)-3-hydroxyacyl-CoA = a (3E)-enoyl-CoA + H2O. It catalyses the reaction (3S)-3-hydroxybutanoyl-CoA = (3R)-3-hydroxybutanoyl-CoA. The catalysed reaction is a (3Z)-enoyl-CoA = a 4-saturated (2E)-enoyl-CoA. It carries out the reaction a (3E)-enoyl-CoA = a 4-saturated (2E)-enoyl-CoA. It participates in lipid metabolism; fatty acid beta-oxidation. Functionally, involved in the aerobic and anaerobic degradation of long-chain fatty acids via beta-oxidation cycle. Catalyzes the formation of 3-oxoacyl-CoA from enoyl-CoA via L-3-hydroxyacyl-CoA. It can also use D-3-hydroxyacyl-CoA and cis-3-enoyl-CoA as substrate. This is Fatty acid oxidation complex subunit alpha from Pseudomonas putida (strain ATCC 47054 / DSM 6125 / CFBP 8728 / NCIMB 11950 / KT2440).